The following is a 581-amino-acid chain: NADH-quinone oxidoreductase subunit C/D (581 aa).

An NADH dehydrogenase I subunit C region spans residues 1-172 (MSAVELVNEL…PPFVMTAARF (172 aa)). An NADH dehydrogenase I subunit D region spans residues 196 to 581 (ELMILNYGPH…IDYVMSDVDR (386 aa)).

This sequence in the N-terminal section; belongs to the complex I 30 kDa subunit family. In the C-terminal section; belongs to the complex I 49 kDa subunit family. As to quaternary structure, NDH-1 is composed of 13 different subunits. Subunits NuoB, CD, E, F, and G constitute the peripheral sector of the complex.

It localises to the cell inner membrane. It carries out the reaction a quinone + NADH + 5 H(+)(in) = a quinol + NAD(+) + 4 H(+)(out). Its function is as follows. NDH-1 shuttles electrons from NADH, via FMN and iron-sulfur (Fe-S) centers, to quinones in the respiratory chain. The immediate electron acceptor for the enzyme in this species is believed to be ubiquinone. Couples the redox reaction to proton translocation (for every two electrons transferred, four hydrogen ions are translocated across the cytoplasmic membrane), and thus conserves the redox energy in a proton gradient. The polypeptide is NADH-quinone oxidoreductase subunit C/D (Rhodopseudomonas palustris (strain BisB18)).